We begin with the raw amino-acid sequence, 95 residues long: MENVRAHLYIKGKVQGVFFRQSMKEIAVRYGVRGWVRNRSDGRTVEAVLEGPRDAVAKVIEWAKVGPPGARVEEVEVDWEEYKGEFQDFRILPTV.

Positions 5–93 (RAHLYIKGKV…GEFQDFRILP (89 aa)) constitute an Acylphosphatase-like domain. Active-site residues include R20 and N38.

The protein belongs to the acylphosphatase family.

The catalysed reaction is an acyl phosphate + H2O = a carboxylate + phosphate + H(+). This is Acylphosphatase (acyP) from Pyrobaculum islandicum (strain DSM 4184 / JCM 9189 / GEO3).